Reading from the N-terminus, the 660-residue chain is Protein SCARECROW 2 (660 aa).

Disordered regions lie at residues 1 to 33 and 190 to 286; these read MGSS…ITSL and SDPA…KQRD. The span at 192–229 shows a compositional bias: pro residues; it reads PAPPPPPPSHPALLPPDATAPPPPPTSVAALPPPPPAQ. The span at 259–272 shows a compositional bias: low complexity; sequence AAAAAAAAAAAAAA. Residues 262-289 are a coiled coil; that stretch reads AAAAAAAAAAAAKERKEEQRRKQRDEEG. Residues 273–286 show a composition bias toward basic and acidic residues; that stretch reads AKERKEEQRRKQRD. One can recognise a GRAS domain in the interval 283–653; the sequence is KQRDEEGLHL…LCLLTASAWR (371 aa). A leucine repeat I (LRI) region spans residues 290 to 354; it reads LHLLTLLLQC…VSSCLGLYAP (65 aa). Positions 297 to 301 match the LxCxE motif motif; it reads LQCAE. The segment at 373 to 438 is VHIID; sequence FQVFNGISPF…GGPPRVRLTG (66 aa). The VHIID signature appears at 404 to 408; it reads VHIID. Residues 448–480 form a leucine repeat II (LRII) region; the sequence is ATGKRLSDFADTLGLPFEFCPVADKAGNLDPEK. The interval 489–576 is PFYRE; that stretch reads VAVHWLRHSL…QQLLSREIRN (88 aa). The SAW stretch occupies residues 579–653; the sequence is AVGGPARTGD…LCLLTASAWR (75 aa).

Belongs to the GRAS family.

The protein localises to the cytoplasm. In terms of biological role, probable transcription factor involved in asmmetric cell division in the cortex/endodermis progenitor cell and in the process of stomata and ligule formation in leaves. This Oryza sativa subsp. indica (Rice) protein is Protein SCARECROW 2 (SCR2).